The following is a 202-amino-acid chain: Josephin-1 (202 aa).

The disordered stretch occupies residues 1-22 (MSCVPWKGDKAKAESSDLPQAA). Ser15 bears the Phosphoserine mark. Residues 23-202 (PPQIYHEKQR…EAHQSWRADV (180 aa)) form the Josephin domain. Residue Cys36 is the Nucleophile of the active site. The active-site Proton acceptor is His139.

In terms of assembly, interacts with beta-actin/ACTB. Post-translationally, monoubiquitinated. Ubiquitination activates deubiquitination activity in vitro. In terms of tissue distribution, widely expressed (at protein level).

It is found in the cell membrane. It localises to the cytoplasm. The enzyme catalyses Thiol-dependent hydrolysis of ester, thioester, amide, peptide and isopeptide bonds formed by the C-terminal Gly of ubiquitin (a 76-residue protein attached to proteins as an intracellular targeting signal).. Deubiquitinates monoubiquitinated probes (in vitro). When ubiquitinated, cleaves 'Lys-63'-linked and 'Lys-48'-linked poly-ubiquitin chains (in vitro), hence may act as a deubiquitinating enzyme. May increase macropinocytosis and suppress clathrin- and caveolae-mediated endocytosis. May enhance membrane dynamics and cell motility independently of its catalytic activity. The sequence is that of Josephin-1 (Josd1) from Mus musculus (Mouse).